We begin with the raw amino-acid sequence, 232 residues long: MTNADPHELQKFSDLAHRWWDPNAEFKPLHELNPVRLKWIDSHAHLTGKRVLDIGCGGGILSESMATLGADVKGIDLSNEALGVADLHSLESGVTVNYEEIAAETLAAREPASFDVATCMEMLEHVPDPSKVVEACKTLVKPGGWVFFSTLNRNVKSYLFAVIGAEYVARMLPKGTHDYARFIRPSELAGFARAAGLLTADIKGITYNPLTRDFGLSSDTDVNYMLACRREA.

S-adenosyl-L-methionine contacts are provided by Arg36, Gly55, Asp76, and Met120.

The protein belongs to the methyltransferase superfamily. UbiG/COQ3 family.

The enzyme catalyses a 3-demethylubiquinol + S-adenosyl-L-methionine = a ubiquinol + S-adenosyl-L-homocysteine + H(+). It catalyses the reaction a 3-(all-trans-polyprenyl)benzene-1,2-diol + S-adenosyl-L-methionine = a 2-methoxy-6-(all-trans-polyprenyl)phenol + S-adenosyl-L-homocysteine + H(+). It participates in cofactor biosynthesis; ubiquinone biosynthesis. Functionally, O-methyltransferase that catalyzes the 2 O-methylation steps in the ubiquinone biosynthetic pathway. This Paraburkholderia phymatum (strain DSM 17167 / CIP 108236 / LMG 21445 / STM815) (Burkholderia phymatum) protein is Ubiquinone biosynthesis O-methyltransferase.